A 216-amino-acid chain; its full sequence is Probable GTP-binding protein EngB (216 aa).

The region spanning 37 to 214 is the EngB-type G domain; that stretch reads QGLEVAFAGR…RAAIIKLVAE (178 aa). Residues 45–52, 72–76, 92–95, 159–162, and 193–195 each bind GTP; these read GRSNVGKS, GRTQE, DMPG, TKAD, and TSS. Ser-52 and Thr-74 together coordinate Mg(2+).

Belongs to the TRAFAC class TrmE-Era-EngA-EngB-Septin-like GTPase superfamily. EngB GTPase family. Requires Mg(2+) as cofactor.

In terms of biological role, necessary for normal cell division and for the maintenance of normal septation. This is Probable GTP-binding protein EngB from Rhodopseudomonas palustris (strain BisA53).